The following is a 306-amino-acid chain: MWFKNLLTYRLTQDVPFEPEALEAALASKPARPCASQELTTYGFVAPFGKGADAPLVHVSGEFLLIAARKEERILPSSVVNDAVKEKVEEIETEQMRKVYKKERDQIKDEIIQAFLPRAFIRRSMIFAAIAPRLGLILVNSASAKRAEDLLSTLREVMGSLPVRPVTVKIAPAATMTDWVKSQHAAEGFYVLDECELRDTGEDGGIVRCKRQDLTGEEIQLHLSTGKVVTQLALAWQDKLSFVLDDKTVIKRLKFEELLQEQAEQDGGDEAQQQFDASFTLMMMTFTEFLPALFEALGGEEIPQGV.

This sequence belongs to the RdgC family.

The protein resides in the cytoplasm. It is found in the nucleoid. Its function is as follows. May be involved in recombination. This Pseudomonas entomophila (strain L48) protein is Recombination-associated protein RdgC.